Consider the following 515-residue polypeptide: Putative myristoylated protein 118L (515 aa).

A lipid anchor (N-myristoyl glycine; by host) is attached at Gly2. 3 consecutive transmembrane segments (helical) span residues 188–208 (LSLAMIALIIVAMGLTGVGGV), 214–234 (IIFPAVLIGSIVSFVLYFQWT), and 482–502 (WLLYLAIGLLIVGVIGMAFSS).

The protein belongs to the IIV-6 118L/458R family.

Its subcellular location is the membrane. The chain is Putative myristoylated protein 118L from Acheta domesticus (House cricket).